Consider the following 495-residue polypeptide: UDP-N-acetylmuramoyl-L-alanyl-D-glutamate--2,6-diaminopimelate ligase (495 aa).

UDP-N-acetyl-alpha-D-muramoyl-L-alanyl-D-glutamate is bound by residues Leu27, Ser29, and 44–46 (HQA). Residue 116 to 122 (GTNGKTT) coordinates ATP. UDP-N-acetyl-alpha-D-muramoyl-L-alanyl-D-glutamate is bound by residues Asn157, 158–159 (TT), Ser185, Gln191, and Arg193. The residue at position 225 (Lys225) is an N6-carboxylysine. Meso-2,6-diaminopimelate-binding positions include Arg390, 414–417 (DNPR), Gly465, and Glu469. A Meso-diaminopimelate recognition motif motif is present at residues 414–417 (DNPR).

This sequence belongs to the MurCDEF family. MurE subfamily. Mg(2+) serves as cofactor. In terms of processing, carboxylation is probably crucial for Mg(2+) binding and, consequently, for the gamma-phosphate positioning of ATP.

The protein resides in the cytoplasm. The enzyme catalyses UDP-N-acetyl-alpha-D-muramoyl-L-alanyl-D-glutamate + meso-2,6-diaminopimelate + ATP = UDP-N-acetyl-alpha-D-muramoyl-L-alanyl-gamma-D-glutamyl-meso-2,6-diaminopimelate + ADP + phosphate + H(+). Its pathway is cell wall biogenesis; peptidoglycan biosynthesis. Catalyzes the addition of meso-diaminopimelic acid to the nucleotide precursor UDP-N-acetylmuramoyl-L-alanyl-D-glutamate (UMAG) in the biosynthesis of bacterial cell-wall peptidoglycan. The chain is UDP-N-acetylmuramoyl-L-alanyl-D-glutamate--2,6-diaminopimelate ligase from Escherichia coli O157:H7.